Consider the following 314-residue polypeptide: Malate dehydrogenase (314 aa).

NAD(+)-binding positions include 11–16 and Asp-35; that span reads GSGNIG. Arg-84 and Arg-90 together coordinate substrate. NAD(+) is bound by residues Asn-97 and 120–122; that span reads ITN. Residues Asn-122 and Arg-153 each contribute to the substrate site. His-177 acts as the Proton acceptor in catalysis.

The protein belongs to the LDH/MDH superfamily. MDH type 3 family.

The catalysed reaction is (S)-malate + NAD(+) = oxaloacetate + NADH + H(+). In terms of biological role, catalyzes the reversible oxidation of malate to oxaloacetate. In Rickettsia typhi (strain ATCC VR-144 / Wilmington), this protein is Malate dehydrogenase.